The primary structure comprises 208 residues: Large ribosomal subunit protein bL25 (208 aa).

Belongs to the bacterial ribosomal protein bL25 family. CTC subfamily. As to quaternary structure, part of the 50S ribosomal subunit; part of the 5S rRNA/L5/L18/L25 subcomplex. Contacts the 5S rRNA. Binds to the 5S rRNA independently of L5 and L18.

Its function is as follows. This is one of the proteins that binds to the 5S RNA in the ribosome where it forms part of the central protuberance. The sequence is that of Large ribosomal subunit protein bL25 from Bordetella pertussis (strain Tohama I / ATCC BAA-589 / NCTC 13251).